A 389-amino-acid polypeptide reads, in one-letter code: 23S rRNA (uracil(747)-C(5))-methyltransferase RlmC (389 aa).

4 residues coordinate [4Fe-4S] cluster: cysteine 12, cysteine 20, cysteine 23, and cysteine 99. 4 residues coordinate S-adenosyl-L-methionine: glutamine 224, phenylalanine 253, glutamate 274, and asparagine 321. Cysteine 348 functions as the Nucleophile in the catalytic mechanism.

It belongs to the class I-like SAM-binding methyltransferase superfamily. RNA M5U methyltransferase family. RlmC subfamily.

It carries out the reaction uridine(747) in 23S rRNA + S-adenosyl-L-methionine = 5-methyluridine(747) in 23S rRNA + S-adenosyl-L-homocysteine + H(+). In terms of biological role, catalyzes the formation of 5-methyl-uridine at position 747 (m5U747) in 23S rRNA. The protein is 23S rRNA (uracil(747)-C(5))-methyltransferase RlmC of Shewanella putrefaciens (strain CN-32 / ATCC BAA-453).